Reading from the N-terminus, the 391-residue chain is Elongation factor Tu 2 (391 aa).

The 192-residue stretch at 10–201 (KPHVNIGTIG…EVDRYIPTPE (192 aa)) folds into the tr-type G domain. The segment at 19–26 (GHVDHGKT) is G1. Residue 19 to 26 (GHVDHGKT) coordinates GTP. Thr-26 provides a ligand contact to Mg(2+). The interval 55–59 (GITIS) is G2. The interval 76–79 (DCPG) is G3. Residues 76–80 (DCPGH) and 131–134 (NKVD) each bind GTP. Residues 131-134 (NKVD) are G4. The interval 169–171 (SAL) is G5.

It belongs to the TRAFAC class translation factor GTPase superfamily. Classic translation factor GTPase family. EF-Tu/EF-1A subfamily. As to quaternary structure, monomer.

It localises to the cytoplasm. It catalyses the reaction GTP + H2O = GDP + phosphate + H(+). Functionally, GTP hydrolase that promotes the GTP-dependent binding of aminoacyl-tRNA to the A-site of ribosomes during protein biosynthesis. This is Elongation factor Tu 2 from Bartonella bacilliformis (strain ATCC 35685 / KC583 / Herrer 020/F12,63).